Consider the following 327-residue polypeptide: Phenylalanine--tRNA ligase alpha subunit (327 aa).

Mg(2+) is bound at residue E252.

Belongs to the class-II aminoacyl-tRNA synthetase family. Phe-tRNA synthetase alpha subunit type 1 subfamily. As to quaternary structure, tetramer of two alpha and two beta subunits. Mg(2+) serves as cofactor.

It is found in the cytoplasm. It catalyses the reaction tRNA(Phe) + L-phenylalanine + ATP = L-phenylalanyl-tRNA(Phe) + AMP + diphosphate + H(+). This chain is Phenylalanine--tRNA ligase alpha subunit, found in Shewanella woodyi (strain ATCC 51908 / MS32).